The chain runs to 418 residues: D-amino acid dehydrogenase (418 aa).

Residue Val3–Trp17 participates in FAD binding.

Belongs to the DadA oxidoreductase family. It depends on FAD as a cofactor.

The enzyme catalyses a D-alpha-amino acid + A + H2O = a 2-oxocarboxylate + AH2 + NH4(+). The protein operates within amino-acid degradation; D-alanine degradation; NH(3) and pyruvate from D-alanine: step 1/1. In terms of biological role, oxidative deamination of D-amino acids. In Agrobacterium fabrum (strain C58 / ATCC 33970) (Agrobacterium tumefaciens (strain C58)), this protein is D-amino acid dehydrogenase.